A 764-amino-acid polypeptide reads, in one-letter code: Aconitate hydratase (764 aa).

Substrate is bound at residue 75-77 (DSH). Residues Cys-307, Cys-372, and Cys-375 each coordinate [4Fe-4S] cluster. Residues Arg-405, Arg-410, Arg-568, and 648–649 (SR) contribute to the substrate site.

Belongs to the aconitase/IPM isomerase family. Requires [4Fe-4S] cluster as cofactor.

The protein resides in the cytoplasm. It carries out the reaction citrate = D-threo-isocitrate. It functions in the pathway carbohydrate metabolism; glyoxylate and dicarboxylate metabolism. In terms of biological role, catalyzes the isomerization of citrate to isocitrate via cis-aconitate. This Cucumis melo var. conomon (Oriental pickling melon) protein is Aconitate hydratase (ACO).